The chain runs to 278 residues: MSVPTVLEKIIARKLEEVAERSRRIGLAELEQQAAIADPVRGFAAALEQRVNAKEPAVIAEVKKASPSKGVIRDPFLPAEIAAGYEAGGAACLSVLTDIDFFQGADAYLQQARAACSLPVIRKDFMIDPYQVVEARALGADCILLIVAALDDARMHELAAVAKAHGLDVLVEVHDGDELERALRLETPLVGINNRNLHTFEVSLETTLDLLPRVPKDRLVITESGILNRADVELMEINQVYAFLVGEAFMRAEQPGVELQRLFFPDRARSRGVVADPE.

It belongs to the TrpC family.

It catalyses the reaction 1-(2-carboxyphenylamino)-1-deoxy-D-ribulose 5-phosphate + H(+) = (1S,2R)-1-C-(indol-3-yl)glycerol 3-phosphate + CO2 + H2O. The protein operates within amino-acid biosynthesis; L-tryptophan biosynthesis; L-tryptophan from chorismate: step 4/5. The protein is Indole-3-glycerol phosphate synthase of Stutzerimonas stutzeri (strain A1501) (Pseudomonas stutzeri).